A 283-amino-acid polypeptide reads, in one-letter code: Thymidylate synthase (283 aa).

DUMP is bound at residue arginine 22. The Nucleophile role is filled by cysteine 160. DUMP contacts are provided by residues 180 to 183 (RSCD), asparagine 191, and 221 to 223 (HIY). Aspartate 183 lines the (6R)-5,10-methylene-5,6,7,8-tetrahydrofolate pocket. Serine 282 serves as a coordination point for (6R)-5,10-methylene-5,6,7,8-tetrahydrofolate.

It belongs to the thymidylate synthase family. Bacterial-type ThyA subfamily. As to quaternary structure, homodimer.

It localises to the cytoplasm. It catalyses the reaction dUMP + (6R)-5,10-methylene-5,6,7,8-tetrahydrofolate = 7,8-dihydrofolate + dTMP. Its pathway is pyrimidine metabolism; dTTP biosynthesis. Catalyzes the reductive methylation of 2'-deoxyuridine-5'-monophosphate (dUMP) to 2'-deoxythymidine-5'-monophosphate (dTMP) while utilizing 5,10-methylenetetrahydrofolate (mTHF) as the methyl donor and reductant in the reaction, yielding dihydrofolate (DHF) as a by-product. This enzymatic reaction provides an intracellular de novo source of dTMP, an essential precursor for DNA biosynthesis. The chain is Thymidylate synthase from Actinobacillus succinogenes (strain ATCC 55618 / DSM 22257 / CCUG 43843 / 130Z).